We begin with the raw amino-acid sequence, 279 residues long: Putative ABC transporter ATP-binding protein CA_C1368 (279 aa).

The ABC transporter domain occupies 4–239 (ISINNVDYIY…KKVLRNINLR (236 aa)). 37-44 (GPNGAGKS) serves as a coordination point for ATP.

The protein belongs to the ABC transporter superfamily.

It is found in the cell membrane. In terms of biological role, probably part of an ABC transporter complex. Responsible for energy coupling to the transport system. The chain is Putative ABC transporter ATP-binding protein CA_C1368 from Clostridium acetobutylicum (strain ATCC 824 / DSM 792 / JCM 1419 / IAM 19013 / LMG 5710 / NBRC 13948 / NRRL B-527 / VKM B-1787 / 2291 / W).